A 366-amino-acid chain; its full sequence is Peptide chain release factor 2 (366 aa).

Q251 bears the N5-methylglutamine mark.

It belongs to the prokaryotic/mitochondrial release factor family. In terms of processing, methylated by PrmC. Methylation increases the termination efficiency of RF2.

The protein resides in the cytoplasm. Its function is as follows. Peptide chain release factor 2 directs the termination of translation in response to the peptide chain termination codons UGA and UAA. This Bacillus subtilis (strain 168) protein is Peptide chain release factor 2 (prfB).